The chain runs to 505 residues: Histidine ammonia-lyase (505 aa).

A cross-link (5-imidazolinone (Ala-Gly)) is located at residues 141–143; the sequence is ASG. Ser142 carries the 2,3-didehydroalanine (Ser) modification.

Belongs to the PAL/histidase family. Contains an active site 4-methylidene-imidazol-5-one (MIO), which is formed autocatalytically by cyclization and dehydration of residues Ala-Ser-Gly.

It is found in the cytoplasm. It carries out the reaction L-histidine = trans-urocanate + NH4(+). The protein operates within amino-acid degradation; L-histidine degradation into L-glutamate; N-formimidoyl-L-glutamate from L-histidine: step 1/3. The polypeptide is Histidine ammonia-lyase (Bacillus cereus (strain ZK / E33L)).